Here is a 345-residue protein sequence, read N- to C-terminus: uncharacterized protein (345 aa).

This is an uncharacterized protein from Saccharomyces cerevisiae (strain ATCC 204508 / S288c) (Baker's yeast).